The following is a 167-amino-acid chain: Keratin-associated protein 1-3 (167 aa).

Belongs to the KRTAP type 1 family. As to quaternary structure, interacts with hair keratins. As to expression, expressed in the middle/upper portions of the hair cortex, in the region termed the keratogenous zone.

In the hair cortex, hair keratin intermediate filaments are embedded in an interfilamentous matrix, consisting of hair keratin-associated proteins (KRTAP), which are essential for the formation of a rigid and resistant hair shaft through their extensive disulfide bond cross-linking with abundant cysteine residues of hair keratins. The matrix proteins include the high-sulfur and high-glycine-tyrosine keratins. The polypeptide is Keratin-associated protein 1-3 (KRTAP1-3) (Homo sapiens (Human)).